A 432-amino-acid chain; its full sequence is MSDKLPYKVADIGLAAWGRKALDIAENEMPGLMRMREQYSASKPLKGARIAGCLHMTVETAVLIETLVALGAEVQWSSCNIFSTQDHAAAAIAKAGIPVYAWKGETDEEYLWCIEQTLYFKDGPLNMILDDGGDLTNLIHTKYPQLLSGIRGISEETTTGVHNLYKMMANGILKVPAINVNDSVTKSKFDNLYGCRESLIDGIKRATDVMIAGKVAVVAGYGDVGKGCAQALRGFGARVIITEIDPINALQAAMEGYEVTTMDEACQEGNIFVTTTGCVDIILGRHFEQMKDDAIVCNIGHFDVEIDVKWLNENAVEKVNIKPQVDRYRLKNGRRIILLAEGRLVNLGCAMGHPSFVMSNSFTNQVMAQIELWTHPDKYPVGVHFLPKKLDEAVAEAHLGKLNVKLTKLTEKQAQYLGMSRDGPFKPDHYRY.

N-acetylserine is present on serine 2. Substrate contacts are provided by threonine 57, aspartate 131, and glutamate 156. At serine 183 the chain carries Phosphoserine. The interval 183–350 (SVTKSKFDNL…EGRLVNLGCA (168 aa)) is NAD binding. Substrate contacts are provided by lysine 186 and aspartate 190. The residue at position 186 (lysine 186) is an N6-(2-hydroxyisobutyryl)lysine. Position 193 is a phosphotyrosine (tyrosine 193).

The protein belongs to the adenosylhomocysteinase family. Homotetramer. Interaction with AHCYL1. The cofactor is NAD(+).

It localises to the cytoplasm. The protein resides in the melanosome. Its subcellular location is the nucleus. It is found in the endoplasmic reticulum. It catalyses the reaction S-adenosyl-L-homocysteine + H2O = L-homocysteine + adenosine. It participates in amino-acid biosynthesis; L-homocysteine biosynthesis; L-homocysteine from S-adenosyl-L-homocysteine: step 1/1. Functionally, catalyzes the hydrolysis of S-adenosyl-L-homocysteine to form adenosine and homocysteine. Binds copper ions. The chain is Adenosylhomocysteinase (AHCY) from Macaca fascicularis (Crab-eating macaque).